A 382-amino-acid polypeptide reads, in one-letter code: 6-hydroxynicotinate 3-monooxygenase (382 aa).

The signal sequence occupies residues Met-1–Gln-25. FAD is bound by residues Gly-15, Glu-34–Gln-35, His-47, Arg-108, and Leu-130. His-47 functions as the Proton acceptor in the catalytic mechanism. Tyr-215 acts as the Proton acceptor in catalysis. FAD contacts are provided by residues Asp-294 and Ala-307–Cys-308.

The protein belongs to the 6-hydroxynicotinate 3-monooxygenase family. As to quaternary structure, monomer. FAD is required as a cofactor.

The catalysed reaction is 6-hydroxynicotinate + NADH + O2 + 2 H(+) = 2,5-dihydroxypyridine + CO2 + NAD(+) + H2O. The protein operates within cofactor degradation; nicotinate degradation. Its function is as follows. Flavin-dependent monooxygenase (FMO) that catalyzes the decarboxylative hydroxylation of 6-hydroxynicotinic acid (6-HNA) to 2,5-dihydroxypyridine (2,5-DHP) with concomitant oxidation of NADH, a step in the aerobic nicotinate degradation pathway. In Pseudomonas putida (strain ATCC 47054 / DSM 6125 / CFBP 8728 / NCIMB 11950 / KT2440), this protein is 6-hydroxynicotinate 3-monooxygenase.